Reading from the N-terminus, the 904-residue chain is MICAL-like protein 2 (904 aa).

Residues 1 to 107 (MAAIRALQQW…YVSQYYNYFH (107 aa)) form the Calponin-homology (CH) domain. The segment at 1-260 (MAAIRALQQW…KLTGLVPRQP (260 aa)) is forms an intramolecular interaction with the C-terminal coiled coil domain keeping the protein in a closed conformation. Phosphoserine occurs at positions 110, 143, and 153. Residues 117 to 178 (GVKRASEDSE…GGPPPKTDQA (62 aa)) are disordered. Pro residues predominate over residues 143–153 (SPAPARKPPLS). The 63-residue stretch at 186 to 248 (STCGVCGKHV…TSHLPAAASA (63 aa)) folds into the LIM zinc-binding domain. A Phosphoserine modification is found at Ser249. The tract at residues 251-722 (KLTGLVPRQP…PANVPALPGE (472 aa)) is disordered. Residues 261–388 (GAMGVDSRTS…GGAPRVAAPQ (128 aa)) are necessary and sufficient for interaction with actinins. Positions 261-697 (GAMGVDSRTS…EARVQSWKEE (437 aa)) are mediates targeting to the cell plasma membrane. Polar residues predominate over residues 267–277 (SRTSCSPQKAQ). Composition is skewed to low complexity over residues 293 to 314 (NSPA…ATSV) and 349 to 362 (SSAA…ASHP). Ser294 carries the post-translational modification Phosphoserine. Residues 363–374 (AVPPSAPDPRPA) are compositionally biased toward pro residues. Over residues 385–400 (AAPQTTLSSSSTSAAT) the composition is skewed to low complexity. Residues 408–433 (PSASRTQQARNKFFQTSAVPPGTSLS) are compositionally biased toward polar residues. Positions 459–480 (ALSALEEAGAPAPGRPSPATAA) are enriched in low complexity. Residues Ser494 and Ser504 each carry the phosphoserine modification. Composition is skewed to low complexity over residues 520 to 534 (LSTS…LPPA) and 542 to 553 (SSGVGRVGAGSR). Residues 564–578 (KSTTLTQDMSTSLQE) show a composition bias toward polar residues. Residues 593–622 (PVDRRSPAERTLKPKEPRALAEPRAGEAPR) show a composition bias toward basic and acidic residues. Ser598 carries the post-translational modification Phosphoserine. At Thr644 the chain carries Phosphothreonine. Over residues 647–661 (PASPGPSLPARSPSP) the composition is skewed to pro residues. Ser649, Ser658, Ser660, and Ser726 each carry phosphoserine. Positions 698–807 (EKKPHLQGKP…LMYKSKAQRL (110 aa)) are forms an intramolecular interaction with the N-terminal Calponin-homology and LIM zinc-binding domains-containing region keeping the protein in a closed conformation. Positions 723–874 (TVTSPVRLHP…EQEEDQMLRD (152 aa)) constitute a bMERB domain. The stretch at 735-771 (LSPEEIQRQLQDIERRLDALELRGVELEKRLRAAEGD) forms a coiled coil. A mediates interaction with RAB13 and is required for transition from the closed to the opened conformation region spans residues 807–903 (LEEQQLDIEG…WSPKSKSSPS (97 aa)).

Interacts with RAB13 (GTP-bound form); competes with RAB8A and is involved in tight junctions assembly. Interacts with RAB8A; competes with RAB13 and is involved in E-cadherin endocytic recycling. Interacts with RAB8B. Interacts (preferentially in opened conformation) with ACTN1 and ACTN4; stimulated by RAB13 activation. Interacts (via calponin-homology (CH) domain) with the filamins FLNA, FLNB and FLNC (via actin-binding domain).

The protein resides in the cell membrane. It is found in the cell junction. Its subcellular location is the tight junction. The protein localises to the recycling endosome. It localises to the cell projection. The protein resides in the cytoplasm. It is found in the cytoskeleton. In terms of biological role, effector of small Rab GTPases which is involved in junctional complexes assembly through the regulation of cell adhesion molecules transport to the plasma membrane and actin cytoskeleton reorganization. Regulates the endocytic recycling of occludins, claudins and E-cadherin to the plasma membrane and may thereby regulate the establishment of tight junctions and adherens junctions. In parallel, may regulate actin cytoskeleton reorganization directly through interaction with F-actin or indirectly through actinins and filamins. Most probably involved in the processes of epithelial cell differentiation, cell spreading and neurite outgrowth. Undergoes liquid-liquid phase separation to form tubular recycling endosomes. Plays 2 sequential roles in the biogenesis of tubular recycling endosomes: first organizes phase separation and then the closed form formed by interaction with RAB8A promotes endosomal tubulation. The sequence is that of MICAL-like protein 2 from Homo sapiens (Human).